We begin with the raw amino-acid sequence, 393 residues long: S-adenosylmethionine synthase 2 (393 aa).

Glu9 contributes to the Mg(2+) binding site. His15 provides a ligand contact to ATP. Glu43 lines the K(+) pocket. Residues Glu56 and Gln99 each coordinate L-methionine. ATP contacts are provided by residues 167-169, 235-238, Asp246, 252-253, Ala269, Lys273, and Lys277; these read DGK, SGRF, and RK. Residue Asp246 coordinates L-methionine. Residue Lys277 coordinates L-methionine.

It belongs to the AdoMet synthase family. As to quaternary structure, homotetramer. The cofactor is Mn(2+). Requires Mg(2+) as cofactor. It depends on Co(2+) as a cofactor. K(+) serves as cofactor.

The protein localises to the cytoplasm. It carries out the reaction L-methionine + ATP + H2O = S-adenosyl-L-methionine + phosphate + diphosphate. It participates in amino-acid biosynthesis; S-adenosyl-L-methionine biosynthesis; S-adenosyl-L-methionine from L-methionine: step 1/1. Its function is as follows. Catalyzes the formation of S-adenosylmethionine from methionine and ATP. The reaction comprises two steps that are both catalyzed by the same enzyme: formation of S-adenosylmethionine (AdoMet) and triphosphate, and subsequent hydrolysis of the triphosphate. In Vitis vinifera (Grape), this protein is S-adenosylmethionine synthase 2 (METK2).